Consider the following 801-residue polypeptide: MSNPDYCIPNFSQTVNERTIIDIFTICRYRSPLVVFCLSHNELAKKYAQDVSMSSGTHVHIIDGSVEITASLYRTFRTIATQLLGRMQIVVFVTVDKSVVSTQVMKSIAWAFRGSFVELRNQSVDSSTLVSKLENLVSFAPLYNVPKCGPDYYGPTVYSELLSLATNARTHWYATIDYSMFTRSVLTGFIAKYFNEEAVPIDKRIVSIVGYNPPYVWTCLRHGIRPTYIEKSLPNPGGKGPFGLILPVINELVLKSKVKYVMHNPQIKLLCLDTFMLSTSMNILYIGAYPATHLLSLQLNGWTILAFDPKITSDWTDAMAKATGAKVIGVNKEFDFKSFSVQANQLNMFQNSKLSVIDDTWVETDYEKFQAEKQAYFEWLIDRTSIDVRLISMKWNRSKDTSVSHLLALLPQPYGASIREMRAFFHKKGASDIKILAAETEKYMDDFTAMSVSDQINTQKFMHCMITTVGDALKMDLDGGRAVIASYSLSNSSNPKERVLKFLSDANKAKAMVVFGAPNTHRLAYAKKVGLVLDSAIKMSKDLITFSNPTGRRWRDYGYSQSELYDAGYVEITIDQMVAYSSDVYNGVGYFANSTYNDLFSWYIPKWYVHKRMLMQDIRLSPAALVKCFTTLIRNICYVPHETYYRFRGILVDKYLRSKNVDPSQYSIVGSGSKTFTVLNHFEVPHECGPLVFEASTDVNISGHLLSLAIAAHFVASPMILWAEQMKYMAVDRMLPPNLDKSLFFDNKVTPSGALQRWHSREEVLLAAEICESYAAMMLNNKHSPDIIGTLKSAINLVFKI.

This sequence belongs to the phytoreovirus protein P5 family.

The protein resides in the virion. The protein localises to the host cytoplasm. The catalysed reaction is a 5'-end diphospho-ribonucleoside in mRNA + GTP + H(+) = a 5'-end (5'-triphosphoguanosine)-ribonucleoside in mRNA + diphosphate. The protein operates within mRNA processing; mRNA capping. Enzyme involved in mRNA capping (Potential). Binds to GTP and might have guanylyltransferase activity. Together with the RNA-directed RNA polymerase P1 and protein P7, forms an transcriptional complex positioned near the channels situated at each of the five-fold vertices of the core. The sequence is that of Putative mRNA-capping enzyme P5 from Alopecurus aequalis (Barnyard grass).